The primary structure comprises 252 residues: Imidazole glycerol phosphate synthase subunit HisF (252 aa).

Residues aspartate 11 and aspartate 130 contribute to the active site.

The protein belongs to the HisA/HisF family. Heterodimer of HisH and HisF.

Its subcellular location is the cytoplasm. The catalysed reaction is 5-[(5-phospho-1-deoxy-D-ribulos-1-ylimino)methylamino]-1-(5-phospho-beta-D-ribosyl)imidazole-4-carboxamide + L-glutamine = D-erythro-1-(imidazol-4-yl)glycerol 3-phosphate + 5-amino-1-(5-phospho-beta-D-ribosyl)imidazole-4-carboxamide + L-glutamate + H(+). The protein operates within amino-acid biosynthesis; L-histidine biosynthesis; L-histidine from 5-phospho-alpha-D-ribose 1-diphosphate: step 5/9. Its function is as follows. IGPS catalyzes the conversion of PRFAR and glutamine to IGP, AICAR and glutamate. The HisF subunit catalyzes the cyclization activity that produces IGP and AICAR from PRFAR using the ammonia provided by the HisH subunit. The sequence is that of Imidazole glycerol phosphate synthase subunit HisF from Staphylococcus aureus (strain bovine RF122 / ET3-1).